Consider the following 756-residue polypeptide: Alpha-1,2-mannosyltransferase MNN26 (756 aa).

Residues 1-10 (MSLRRLSPSH) are Cytoplasmic-facing. The helical transmembrane segment at 11-31 (LILGTLVLGVIIFNLYVLTST) threads the bilayer. At 32–756 (HEDIKKVKGP…NGKNKQGAAS (725 aa)) the chain is on the extracellular side. The span at 723–734 (LGEKSQPKQPEI) shows a compositional bias: polar residues. Residues 723–756 (LGEKSQPKQPEINNNNNNNNNDDDNGKNKQGAAS) are disordered.

The protein belongs to the MNN1/MNT family.

The protein localises to the golgi apparatus membrane. It functions in the pathway protein modification; protein glycosylation. Alpha-1,2-mannosyltransferase required for cell wall integrity. Responsible for addition of the first alpha-1,2-linked mannose to form the branches on the mannan backbone of oligosaccharides. Addition of alpha-1,2-mannose is required for stabilization of the alpha-1,6-mannose backbone and hence regulates mannan fibril length; and is important for both immune recognition and virulence. The sequence is that of Alpha-1,2-mannosyltransferase MNN26 (MNN26) from Candida albicans (strain SC5314 / ATCC MYA-2876) (Yeast).